The sequence spans 145 residues: D-aminoacyl-tRNA deacylase (145 aa).

The short motif at 137–138 (GP) is the Gly-cisPro motif, important for rejection of L-amino acids element.

This sequence belongs to the DTD family. In terms of assembly, homodimer.

It is found in the cytoplasm. The catalysed reaction is glycyl-tRNA(Ala) + H2O = tRNA(Ala) + glycine + H(+). The enzyme catalyses a D-aminoacyl-tRNA + H2O = a tRNA + a D-alpha-amino acid + H(+). Its function is as follows. An aminoacyl-tRNA editing enzyme that deacylates mischarged D-aminoacyl-tRNAs. Also deacylates mischarged glycyl-tRNA(Ala), protecting cells against glycine mischarging by AlaRS. Acts via tRNA-based rather than protein-based catalysis; rejects L-amino acids rather than detecting D-amino acids in the active site. By recycling D-aminoacyl-tRNA to D-amino acids and free tRNA molecules, this enzyme counteracts the toxicity associated with the formation of D-aminoacyl-tRNA entities in vivo and helps enforce protein L-homochirality. The protein is D-aminoacyl-tRNA deacylase of Pseudomonas fluorescens (strain SBW25).